A 175-amino-acid polypeptide reads, in one-letter code: ADP-ribosylation factor 6 (175 aa).

Glycine 2 carries the N-myristoyl glycine lipid modification. Residue lysine 3 is the site of N6-myristoyl lysine attachment. GTP is bound by residues 23-28, 41-44, 63-67, 122-125, and 155-156; these read AAGKTT, TIPT, DVGGQ, NKQD, and CA.

The protein belongs to the small GTPase superfamily. Arf family. Interacts (when activated) with GGA1, GGA2 and GGA3; the interaction is required for proper subcellular location of GGA1, GGA2 and GGA3. Interacts with PIP5K1C. Interacts with USP6 (via Rab-GAP TBC domain). Interacts with RAB11FIP3 and RAB11FIP4. Interacts with HERC1. Interacts with ARHGAP21. Interacts with ASAP3; the interaction is stabilized by calcium ions. Interacts with NCS1/FREQ at the plasma membrane. Interacts with TBC1D24. Interacts with ECPAS. Interacts with MICALL1. Interacts with SPAG9 homodimers, forming heterotetramers. Interacts with CYTH3. Interacts with ASAP2. Interacts with UACA. Interacts with KIF23, forming heterodimers and heterotetramers. Interacts with C9orf72. Interacts (GTP-bound form) with TJAP1/PILT. Interacts with PRKAA2. Interacts with CD36 (when palmitoylated); this interaction mediates CD36 transport from the Golgi to the plasma membrane. Interacts with APBB1. As to quaternary structure, (Microbial infection) Interacts with the V.cholerae enterotoxin subunit A1; this causes a conformation change so that the toxin can bind NAD and catalyze the ADP-ribosylation of Gs alpha. In terms of assembly, (Microbial infection) Interacts with EspG from enteropathogenic E.coli. (Microbial infection) Identified in a complex with RAB1A and EspG from enteropathogenic E.coli. As to quaternary structure, (Microbial infection) Interacts with human enterovirus 71 protein VP1. GTP-bound form is myristoylated on Lys-3 by NMT1 and NMT2, allowing ARF6 to remain on membranes during the GTPase cycle, thereby promoting its activity. GDP-bound inactive form is demyristoylated on Lys-3 by SIRT2 at early endosomes or endocytic recycling compartment to allow its efficient activation by a guanine exchange factor (GEF) after GDP release. As to expression, ubiquitous, with higher levels in heart, substantia nigra, and kidney.

It localises to the cytoplasm. The protein resides in the cytosol. The protein localises to the cell membrane. Its subcellular location is the endosome membrane. It is found in the recycling endosome membrane. It localises to the cell projection. The protein resides in the filopodium membrane. The protein localises to the ruffle. Its subcellular location is the cleavage furrow. It is found in the midbody. It localises to the midbody ring. The protein resides in the early endosome membrane. The protein localises to the golgi apparatus. Its subcellular location is the trans-Golgi network membrane. It catalyses the reaction GTP + H2O = GDP + phosphate + H(+). With respect to regulation, activation is generally mediated by a guanine exchange factor (GEF), while inactivation through hydrolysis of bound GTP is catalyzed by a GTPase activating protein (GAP). Activated by ASAP3. Inactivated by ACAP1 and ACAP2. Activated by NGF via NTRK1. Activated by PRKAA2 through its C-terminal regulatory domain. Functionally, GTP-binding protein involved in protein trafficking that regulates endocytic recycling and cytoskeleton remodeling. GTP-bound form plays an important role in the transport of multiple palmitoylated proteins form the Golgi to the plasma membrane. Required for normal completion of mitotic cytokinesis. Plays a role in the reorganization of the actin cytoskeleton and the formation of stress fibers. Involved in the regulation of dendritic spine development, contributing to the regulation of dendritic branching and filopodia extension. Potentiates the neurite outgrowth in primary neurons by interacting with the molecular adapter APBB1. Plays an important role in membrane trafficking, during junctional remodeling and epithelial polarization. Regulates surface levels of adherens junction proteins such as CDH1. Required for NTRK1 sorting to the recycling pathway from early endosomes. In terms of biological role, (Microbial infection) Functions as an allosteric activator of the cholera toxin catalytic subunit, an ADP-ribosyltransferase. Its function is as follows. (Microbial infection) Plays a key role in the endocytosis of enterovirus 71 and thus viral entry into brain microvascular endothelial cells. This is ADP-ribosylation factor 6 from Homo sapiens (Human).